The primary structure comprises 145 residues: Neuropeptide-like protein 68 (145 aa).

The N-terminal stretch at Met1–Gly15 is a signal peptide. Residues Ser41–Ile65 form a disordered region.

Its subcellular location is the secreted. The chain is Neuropeptide-like protein 68 from Caenorhabditis elegans.